The primary structure comprises 352 residues: Divinyl chlorophyll a/b light-harvesting protein PcbB (352 aa).

The next 6 helical transmembrane spans lie at 27 to 47 (FIAA…AFTL), 89 to 109 (CTVI…GGIL), 142 to 162 (FILG…VEWA), 203 to 223 (VMGG…FHII), 243 to 263 (AVLS…AFWS), and 307 to 327 (LANV…WHAL).

Belongs to the PsbB/PsbC family. IsiA/Pcb subfamily. As to quaternary structure, the antenna complex consists of divinyl chlorophylls (a and b) and divinyl chlorophyll a/b binding proteins and binds more divinyl chlorophyll b than does the antenna complex from high-light-adapted Prochlorococcus. Requires divinyl chlorophyll a as cofactor. Divinyl chlorophyll b is required as a cofactor.

It localises to the cellular thylakoid membrane. Its function is as follows. The antenna complex functions as a light receptor, it captures and delivers excitation energy to photosystems II and I. The Prochlorales pcb genes are not related to higher plant LHCs. The protein is Divinyl chlorophyll a/b light-harvesting protein PcbB (pcbB) of Prochlorococcus marinus (strain NATL2A).